A 259-amino-acid polypeptide reads, in one-letter code: Dihydroorotate dehydrogenase B (NAD(+)), electron transfer subunit (259 aa).

One can recognise an FAD-binding FR-type domain in the interval 2–102 (MQKQNMIVVN…LGPLGHGFPV (101 aa)). FAD-binding positions include 53 to 56 (RPIS), 70 to 72 (LYR), and 77 to 78 (GT). [2Fe-2S] cluster contacts are provided by C221, C226, C229, and C246.

Belongs to the PyrK family. In terms of assembly, heterotetramer of 2 PyrK and 2 PyrD type B subunits. It depends on [2Fe-2S] cluster as a cofactor. FAD serves as cofactor.

It functions in the pathway pyrimidine metabolism; UMP biosynthesis via de novo pathway; orotate from (S)-dihydroorotate (NAD(+) route): step 1/1. Its function is as follows. Responsible for channeling the electrons from the oxidation of dihydroorotate from the FMN redox center in the PyrD type B subunit to the ultimate electron acceptor NAD(+). The protein is Dihydroorotate dehydrogenase B (NAD(+)), electron transfer subunit of Bacillus cereus (strain ZK / E33L).